The sequence spans 446 residues: Na(+)-translocating NADH-quinone reductase subunit A (446 aa).

Belongs to the NqrA family. In terms of assembly, composed of six subunits; NqrA, NqrB, NqrC, NqrD, NqrE and NqrF.

It carries out the reaction a ubiquinone + n Na(+)(in) + NADH + H(+) = a ubiquinol + n Na(+)(out) + NAD(+). Functionally, NQR complex catalyzes the reduction of ubiquinone-1 to ubiquinol by two successive reactions, coupled with the transport of Na(+) ions from the cytoplasm to the periplasm. NqrA to NqrE are probably involved in the second step, the conversion of ubisemiquinone to ubiquinol. In Aliivibrio salmonicida (strain LFI1238) (Vibrio salmonicida (strain LFI1238)), this protein is Na(+)-translocating NADH-quinone reductase subunit A.